Reading from the N-terminus, the 367-residue chain is Alanine racemase (367 aa).

The Proton acceptor; specific for D-alanine role is filled by lysine 40. Lysine 40 carries the N6-(pyridoxal phosphate)lysine modification. Arginine 136 is a binding site for substrate. The active-site Proton acceptor; specific for L-alanine is the tyrosine 263. Position 310 (methionine 310) interacts with substrate.

It belongs to the alanine racemase family. Pyridoxal 5'-phosphate is required as a cofactor.

It catalyses the reaction L-alanine = D-alanine. The protein operates within amino-acid biosynthesis; D-alanine biosynthesis; D-alanine from L-alanine: step 1/1. Its function is as follows. Catalyzes the interconversion of L-alanine and D-alanine. May also act on other amino acids. This chain is Alanine racemase (alr), found in Streptococcus pneumoniae (strain Hungary19A-6).